Reading from the N-terminus, the 269-residue chain is Formamidopyrimidine-DNA glycosylase (269 aa).

Pro-2 functions as the Schiff-base intermediate with DNA in the catalytic mechanism. Catalysis depends on Glu-3, which acts as the Proton donor. Residue Lys-57 is the Proton donor; for beta-elimination activity of the active site. DNA contacts are provided by His-90, Arg-109, and Lys-150. Residues 235–269 form an FPG-type zinc finger; the sequence is QVYGKAGEPCPECGEAIQEQKIGQRNTFYCSYCQC. Arg-259 functions as the Proton donor; for delta-elimination activity in the catalytic mechanism.

Belongs to the FPG family. As to quaternary structure, monomer. It depends on Zn(2+) as a cofactor.

The catalysed reaction is Hydrolysis of DNA containing ring-opened 7-methylguanine residues, releasing 2,6-diamino-4-hydroxy-5-(N-methyl)formamidopyrimidine.. The enzyme catalyses 2'-deoxyribonucleotide-(2'-deoxyribose 5'-phosphate)-2'-deoxyribonucleotide-DNA = a 3'-end 2'-deoxyribonucleotide-(2,3-dehydro-2,3-deoxyribose 5'-phosphate)-DNA + a 5'-end 5'-phospho-2'-deoxyribonucleoside-DNA + H(+). Involved in base excision repair of DNA damaged by oxidation or by mutagenic agents. Acts as a DNA glycosylase that recognizes and removes damaged bases. Has a preference for oxidized purines, such as 7,8-dihydro-8-oxoguanine (8-oxoG). Has AP (apurinic/apyrimidinic) lyase activity and introduces nicks in the DNA strand. Cleaves the DNA backbone by beta-delta elimination to generate a single-strand break at the site of the removed base with both 3'- and 5'-phosphates. This chain is Formamidopyrimidine-DNA glycosylase, found in Vibrio vulnificus (strain CMCP6).